The chain runs to 132 residues: Holo-[acyl-carrier-protein] synthase (132 aa).

Mg(2+) is bound by residues aspartate 8 and glutamate 64.

The protein belongs to the P-Pant transferase superfamily. AcpS family. Requires Mg(2+) as cofactor.

The protein localises to the cytoplasm. The catalysed reaction is apo-[ACP] + CoA = holo-[ACP] + adenosine 3',5'-bisphosphate + H(+). Transfers the 4'-phosphopantetheine moiety from coenzyme A to a Ser of acyl-carrier-protein. In Shewanella sediminis (strain HAW-EB3), this protein is Holo-[acyl-carrier-protein] synthase.